The sequence spans 361 residues: Chorismate synthase (361 aa).

Residues Arg-48 and Arg-54 each contribute to the NADP(+) site. FMN-binding positions include 131-133 (RSS), 243-244 (NA), Gly-287, 302-306 (KPTSS), and Arg-328.

This sequence belongs to the chorismate synthase family. As to quaternary structure, homotetramer. FMNH2 serves as cofactor.

It catalyses the reaction 5-O-(1-carboxyvinyl)-3-phosphoshikimate = chorismate + phosphate. It participates in metabolic intermediate biosynthesis; chorismate biosynthesis; chorismate from D-erythrose 4-phosphate and phosphoenolpyruvate: step 7/7. In terms of biological role, catalyzes the anti-1,4-elimination of the C-3 phosphate and the C-6 proR hydrogen from 5-enolpyruvylshikimate-3-phosphate (EPSP) to yield chorismate, which is the branch point compound that serves as the starting substrate for the three terminal pathways of aromatic amino acid biosynthesis. This reaction introduces a second double bond into the aromatic ring system. This is Chorismate synthase from Rhodopseudomonas palustris (strain HaA2).